The sequence spans 702 residues: Ribosomal RNA large subunit methyltransferase K/L (702 aa).

Positions 43–154 (LVYQSLMWSR…KETASIALDL (112 aa)) constitute a THUMP domain.

It belongs to the methyltransferase superfamily. RlmKL family.

It localises to the cytoplasm. It carries out the reaction guanosine(2445) in 23S rRNA + S-adenosyl-L-methionine = N(2)-methylguanosine(2445) in 23S rRNA + S-adenosyl-L-homocysteine + H(+). It catalyses the reaction guanosine(2069) in 23S rRNA + S-adenosyl-L-methionine = N(2)-methylguanosine(2069) in 23S rRNA + S-adenosyl-L-homocysteine + H(+). Functionally, specifically methylates the guanine in position 2445 (m2G2445) and the guanine in position 2069 (m7G2069) of 23S rRNA. In Escherichia coli (strain SMS-3-5 / SECEC), this protein is Ribosomal RNA large subunit methyltransferase K/L.